A 238-amino-acid polypeptide reads, in one-letter code: Survival of motor neuron-related-splicing factor 30 (238 aa).

The Tudor domain occupies Ser-72–Lys-132. Residues Lys-142–Lys-160 carry the Nuclear localization signal motif. Residue Ser-201 is modified to Phosphoserine. Position 219 is an N6-acetyllysine (Lys-219).

Belongs to the SMN family. Associates with spliceosomes. Associates with U4/U5/U6 tri-snRNP and with U2 snRNP.

Its subcellular location is the nucleus speckle. The protein resides in the nucleus. The protein localises to the cajal body. In terms of biological role, involved in spliceosome assembly. The protein is Survival of motor neuron-related-splicing factor 30 (SMNDC1) of Pongo abelii (Sumatran orangutan).